The chain runs to 144 residues: Transcriptional regulator MraZ (144 aa).

SpoVT-AbrB domains follow at residues 5-47 (EYDH…TLDE) and 76-119 (AVEV…DRET).

Belongs to the MraZ family. Forms oligomers.

The protein resides in the cytoplasm. It localises to the nucleoid. The chain is Transcriptional regulator MraZ from Staphylococcus aureus.